Reading from the N-terminus, the 508-residue chain is Nucleolar complex protein 4 homolog (508 aa).

The next 3 helical transmembrane spans lie at 288–308, 341–361, and 367–387; these read VAYG…FILI, HLAD…AAFI, and LALT…CNLF.

Belongs to the CBF/MAK21 family.

The protein resides in the nucleus membrane. Its subcellular location is the nucleus. It localises to the nucleolus. The sequence is that of Nucleolar complex protein 4 homolog (NOC4L) from Gallus gallus (Chicken).